A 441-amino-acid chain; its full sequence is Protein translocase subunit SecY (441 aa).

The next 10 helical transmembrane spans lie at 18–38, 78–98, 124–144, 157–177, 180–200, 215–235, 272–292, 318–338, 382–402, and 403–423; these read ILFTLGIVILYRVGAALPSPG, AVGVMPYITASIIVQLLTVVI, IALAILQATSIVALAANGGLL, IFTLVVIVLVMTGGAALVMWM, LITERGIGNGMSLLIFVGIAA, GVVFTAVCAAALIIIVGVVFV, VIPVIFASSLIYIPHLITQLI, LVYIGIYFGLIIFFTYFYVSI, IYLGVIAVLPNLFLQIGAGGT, and VQNLPFGGTAVLIMIGVGLDT.

This sequence belongs to the SecY/SEC61-alpha family. As to quaternary structure, component of the Sec protein translocase complex. Heterotrimer consisting of SecY, SecE and SecG subunits. The heterotrimers can form oligomers, although 1 heterotrimer is thought to be able to translocate proteins. Interacts with the ribosome. Interacts with SecDF, and other proteins may be involved. Interacts with SecA.

The protein resides in the cell membrane. Functionally, the central subunit of the protein translocation channel SecYEG. Consists of two halves formed by TMs 1-5 and 6-10. These two domains form a lateral gate at the front which open onto the bilayer between TMs 2 and 7, and are clamped together by SecE at the back. The channel is closed by both a pore ring composed of hydrophobic SecY resides and a short helix (helix 2A) on the extracellular side of the membrane which forms a plug. The plug probably moves laterally to allow the channel to open. The ring and the pore may move independently. The protein is Protein translocase subunit SecY of Mycobacterium bovis (strain ATCC BAA-935 / AF2122/97).